The chain runs to 330 residues: Phosphate acyltransferase (330 aa).

This sequence belongs to the PlsX family. As to quaternary structure, homodimer. Probably interacts with PlsY.

It localises to the cytoplasm. The enzyme catalyses a fatty acyl-[ACP] + phosphate = an acyl phosphate + holo-[ACP]. It participates in lipid metabolism; phospholipid metabolism. Catalyzes the reversible formation of acyl-phosphate (acyl-PO(4)) from acyl-[acyl-carrier-protein] (acyl-ACP). This enzyme utilizes acyl-ACP as fatty acyl donor, but not acyl-CoA. In Lactobacillus delbrueckii subsp. bulgaricus (strain ATCC 11842 / DSM 20081 / BCRC 10696 / JCM 1002 / NBRC 13953 / NCIMB 11778 / NCTC 12712 / WDCM 00102 / Lb 14), this protein is Phosphate acyltransferase.